Consider the following 42-residue polypeptide: Cytochrome b559 subunit beta (42 aa).

The chain crosses the membrane as a helical span at residues 17–33; the sequence is WLAIHAIGIPAVFFIGS. His-21 is a binding site for heme.

Belongs to the PsbE/PsbF family. As to quaternary structure, heterodimer of an alpha subunit and a beta subunit. PSII is composed of 1 copy each of membrane proteins PsbA, PsbB, PsbC, PsbD, PsbE, PsbF, PsbH, PsbI, PsbJ, PsbK, PsbL, PsbM, PsbT, PsbX, PsbY, PsbZ, Psb30/Ycf12, at least 3 peripheral proteins of the oxygen-evolving complex and a large number of cofactors. It forms dimeric complexes. Heme b serves as cofactor.

The protein localises to the plastid. It is found in the cyanelle thylakoid membrane. Its function is as follows. This b-type cytochrome is tightly associated with the reaction center of photosystem II (PSII). PSII is a light-driven water:plastoquinone oxidoreductase that uses light energy to abstract electrons from H(2)O, generating O(2) and a proton gradient subsequently used for ATP formation. It consists of a core antenna complex that captures photons, and an electron transfer chain that converts photonic excitation into a charge separation. This is Cytochrome b559 subunit beta from Cyanophora paradoxa.